The following is a 778-amino-acid chain: Pentatricopeptide repeat-containing protein At3g09650, chloroplastic (778 aa).

The transit peptide at 1-65 directs the protein to the chloroplast; it reads MNILRPPTSS…RSASGTANSS (65 aa). PPR repeat units follow at residues 235–269, 270–304, and 305–339; these read DTAAFNAVLNACANLGDTDKYWKLFEEMSEWDCEP, DVLTYNVMIKLCARVGRKELIVFVLERIIDKGIKV, and CMTTMHSLVAAYVGFGDLRTAERIVQAMREKRRDL. The disordered stretch occupies residues 351–381; that stretch reads LKEKEEEEAEDDEDAFEDDEDSGYSARDEVS. Residues 355–372 are compositionally biased toward acidic residues; it reads EEEEAEDDEDAFEDDEDS. PPR repeat units follow at residues 413–443, 451–485, 486–521, 522–556, 557–587, 593–627, and 628–658; these read DSRIYTTLMKGYMKNGRVADTARMLEAMRRQ, DEVTYTTVVSAFVNAGLMDRARQVLAEMARMGVPA, NRITYNVLLKGYCKQLQIDRAEDLLREMTEDAGIEP, DVVSYNIIIDGCILIDDSAGALAFFNEMRTRGIAP, TKISYTTLMKAFAMSGQPKLANRVFDEMMND, DLIAWNMLVEGYCRLGLIEDAQRVVSRMKENGFYP, and NVATYGSLANGVSQARKPGDALLLWKEIKER.

This sequence belongs to the PPR family. P subfamily.

It is found in the plastid. It localises to the chloroplast stroma. In terms of biological role, involved in the processing of polycistronic chloroplast psbB-psbT-psbH-petB-petD transcript. Could bind RNA. The protein is Pentatricopeptide repeat-containing protein At3g09650, chloroplastic (HCF152) of Arabidopsis thaliana (Mouse-ear cress).